The sequence spans 275 residues: Diaminopimelate epimerase (275 aa).

Residues N12, Q45, and N65 each coordinate substrate. C74 serves as the catalytic Proton donor. Substrate is bound by residues 75–76, N158, N191, and 209–210; these read GN and ER. The active-site Proton acceptor is C218. Position 219-220 (219-220) interacts with substrate; that stretch reads GT.

This sequence belongs to the diaminopimelate epimerase family. Homodimer.

The protein resides in the cytoplasm. It carries out the reaction (2S,6S)-2,6-diaminopimelate = meso-2,6-diaminopimelate. It participates in amino-acid biosynthesis; L-lysine biosynthesis via DAP pathway; DL-2,6-diaminopimelate from LL-2,6-diaminopimelate: step 1/1. Functionally, catalyzes the stereoinversion of LL-2,6-diaminopimelate (L,L-DAP) to meso-diaminopimelate (meso-DAP), a precursor of L-lysine and an essential component of the bacterial peptidoglycan. The sequence is that of Diaminopimelate epimerase from Shewanella frigidimarina (strain NCIMB 400).